The following is a 130-amino-acid chain: Small ribosomal subunit protein uS11 (130 aa).

It belongs to the universal ribosomal protein uS11 family. As to quaternary structure, part of the 30S ribosomal subunit. Interacts with proteins S7 and S18. Binds to IF-3.

Its function is as follows. Located on the platform of the 30S subunit, it bridges several disparate RNA helices of the 16S rRNA. Forms part of the Shine-Dalgarno cleft in the 70S ribosome. The sequence is that of Small ribosomal subunit protein uS11 from Prochlorococcus marinus subsp. pastoris (strain CCMP1986 / NIES-2087 / MED4).